The primary structure comprises 65 residues: Large ribosomal subunit protein bL35 (65 aa).

It belongs to the bacterial ribosomal protein bL35 family.

This is Large ribosomal subunit protein bL35 from Paraburkholderia phytofirmans (strain DSM 17436 / LMG 22146 / PsJN) (Burkholderia phytofirmans).